The primary structure comprises 356 residues: Histidinol-phosphate aminotransferase (356 aa).

An N6-(pyridoxal phosphate)lysine modification is found at Lys211.

This sequence belongs to the class-II pyridoxal-phosphate-dependent aminotransferase family. Histidinol-phosphate aminotransferase subfamily. Homodimer. Pyridoxal 5'-phosphate serves as cofactor.

It carries out the reaction L-histidinol phosphate + 2-oxoglutarate = 3-(imidazol-4-yl)-2-oxopropyl phosphate + L-glutamate. The protein operates within amino-acid biosynthesis; L-histidine biosynthesis; L-histidine from 5-phospho-alpha-D-ribose 1-diphosphate: step 7/9. This Blochmanniella floridana protein is Histidinol-phosphate aminotransferase.